Reading from the N-terminus, the 278-residue chain is 4-deoxy-L-threo-5-hexosulose-uronate ketol-isomerase (278 aa).

Positions 196, 198, 203, and 245 each coordinate Zn(2+).

This sequence belongs to the KduI family. Requires Zn(2+) as cofactor.

The catalysed reaction is 5-dehydro-4-deoxy-D-glucuronate = 3-deoxy-D-glycero-2,5-hexodiulosonate. It functions in the pathway glycan metabolism; pectin degradation; 2-dehydro-3-deoxy-D-gluconate from pectin: step 4/5. Its function is as follows. Catalyzes the isomerization of 5-dehydro-4-deoxy-D-glucuronate to 3-deoxy-D-glycero-2,5-hexodiulosonate. This chain is 4-deoxy-L-threo-5-hexosulose-uronate ketol-isomerase, found in Yersinia pseudotuberculosis serotype O:1b (strain IP 31758).